Consider the following 325-residue polypeptide: Leucine carboxyl methyltransferase 1 (325 aa).

Residues Arg-79, Gly-104, Asp-127, 174 to 175 (DL), and Glu-200 each bind S-adenosyl-L-methionine.

It belongs to the methyltransferase superfamily. LCMT family.

The enzyme catalyses [phosphatase 2A protein]-C-terminal L-leucine + S-adenosyl-L-methionine = [phosphatase 2A protein]-C-terminal L-leucine methyl ester + S-adenosyl-L-homocysteine. Methylates the carboxyl group of the C-terminal leucine residue of protein phosphatase 2A catalytic subunits to form alpha-leucine ester residues. This is Leucine carboxyl methyltransferase 1 (PPM1) from Eremothecium gossypii (strain ATCC 10895 / CBS 109.51 / FGSC 9923 / NRRL Y-1056) (Yeast).